A 290-amino-acid chain; its full sequence is Lysine export transcriptional regulatory protein LysG (290 aa).

The HTH lysR-type domain occupies 1-57 (MNPIQLDTLLSIIDEGSFEGASLALSISPSAVSQRVKALEHHVGRVLVSRTQPAKAT). Residues 18-37 (FEGASLALSISPSAVSQRVK) constitute a DNA-binding region (H-T-H motif).

Belongs to the LysR transcriptional regulatory family.

In terms of biological role, positively regulates the expression of the exporter LysE. Induction requires the presence of a coinducer, which is either intracellular L-lysine, L-arginine or L-citrulline. L-histidine also acts as a coinducer of lysE expression, but this amino acid is not exported by LysE. The lysEG system prevents bacteriostasis due to elevated L-lysine or L-arginine concentrations that arise during growth in the presence of peptides or in mutants possessing a deregulated biosynthesis pathway. This is Lysine export transcriptional regulatory protein LysG from Corynebacterium glutamicum (strain ATCC 13032 / DSM 20300 / JCM 1318 / BCRC 11384 / CCUG 27702 / LMG 3730 / NBRC 12168 / NCIMB 10025 / NRRL B-2784 / 534).